Consider the following 700-residue polypeptide: MTTLEEISALTRPRHPDDWTEIDSAAVDTIRVLAADAVQKVGNGHPGTAMSLAPLAYTLFQRTMRHDPSDTHWLGRDRFVLSAGHSSLTLYIQLYLGGFGLELSDIESLRTWGSKTPGHPEFRHTPGVEITTGPLGQGLASAVGMAMASRYERGLFDPDAEPGASPFDHYIYVIASDGDIEEGVTSEASSLAAVQQLGNLIVFYDRNQISIEDDTNIALCEDTAARYRAYGWHVQEVEGGENVVGIEEAIANAQAVTDRPSFIALRTVIGYPAPNLMDTGKAHGAALGDDEVAAVKKIVGFDPDKTFQVREDVLTHTRGLVARGKQAHERWQLEFDAWARREPERKALLDRLLAQKLPDGWDADLPHWEPGSKALATRAASGAVLSALGPKLPELWGGSADLAGSNNTTIKGADSFGPPSISTKEYTAHWYGRTLHFGVREHAMGAILSGIVLHGPTRAYGGTFLQFSDYMRPAVRLAALMDIDTIYVWTHDSIGLGEDGPTHQPIEHLSALRAIPRLSVVRPADANETAYAWRTILARRNGSGPVGLILTRQGVPVLDGTDAEGVARGGYVLSDAGGLQPGEEPDVILIATGSEVQLAVAAQTLLADNDILARVVSMPCLEWFEAQPYEYRDAVLPPTVSARVAVEAGVAQCWHQLVGDTGEIVSIEHYGESADHKTLFREYGFTAEAVAAAAERALDN.

H45 is a binding site for substrate. Residues T48, H85, and 133–135 contribute to the thiamine diphosphate site; that span reads GPL. D177 contacts Mg(2+). Thiamine diphosphate is bound by residues G178 and N207. Positions 207 and 209 each coordinate Mg(2+). Residues H283, R378, and S405 each coordinate substrate. Residue H283 participates in thiamine diphosphate binding. The active-site Proton donor is the E441. Residue F467 coordinates thiamine diphosphate. The substrate site is built by H491, D499, and R552.

This sequence belongs to the transketolase family. In terms of assembly, homodimer. Mg(2+) is required as a cofactor. It depends on Ca(2+) as a cofactor. The cofactor is Mn(2+). Co(2+) serves as cofactor. Requires thiamine diphosphate as cofactor.

The enzyme catalyses D-sedoheptulose 7-phosphate + D-glyceraldehyde 3-phosphate = aldehydo-D-ribose 5-phosphate + D-xylulose 5-phosphate. Functionally, catalyzes the transfer of a two-carbon ketol group from a ketose donor to an aldose acceptor, via a covalent intermediate with the cofactor thiamine pyrophosphate. The polypeptide is Transketolase (tkt) (Mycobacterium bovis (strain ATCC BAA-935 / AF2122/97)).